Reading from the N-terminus, the 320-residue chain is Probable cell division protein WhiA (320 aa).

Positions 276–310 (TLKELGELVSGGKISKSGINHRLRKIDEIAERLRA) form a DNA-binding region, H-T-H motif.

It belongs to the WhiA family.

In terms of biological role, involved in cell division and chromosome segregation. This is Probable cell division protein WhiA from Geobacillus sp. (strain WCH70).